The following is a 156-amino-acid chain: Fibroblast growth factor 2 (156 aa).

Residues Met-1–Leu-9 constitute a propeptide that is removed on maturation. Heparin is bound at residue Asn-37. Phosphotyrosine; by TEC is present on Tyr-83. Lys-96 is covalently cross-linked (Glycyl lysine isopeptide (Lys-Gly) (interchain with G-Cter in SUMO1)). Residues Lys-129–Lys-145 form a heparin-binding region.

It belongs to the heparin-binding growth factors family. Monomer. Homodimer. Interacts with FGFR1, FGFR2, FGFR3 and FGFR4. Affinity between fibroblast growth factors (FGFs) and their receptors is increased by heparan sulfate glycosaminoglycans that function as coreceptors. Interacts with CSPG4, FGFBP1 and TEC. Found in a complex with FGFBP1, FGF1 and FGF2. Interacts with FGFBP3. Interacts with integrin ITGAV:ITGB3; the interaction is required for FGF2 signaling. Interacts with SNORC (via the extracellular domain). Interacts with glypican GPC3. Phosphorylation at Tyr-83 regulates FGF2 unconventional secretion.

It localises to the secreted. The protein resides in the nucleus. Acts as a ligand for FGFR1, FGFR2, FGFR3 and FGFR4. Also acts as an integrin ligand which is required for FGF2 signaling. Binds to integrin ITGAV:ITGB3. Plays an important role in the regulation of cell survival, cell division, cell differentiation and cell migration. Functions as a potent mitogen in vitro. Can induce angiogenesis. Mediates phosphorylation of ERK1/2 and thereby promotes retinal lens fiber differentiation. This chain is Fibroblast growth factor 2 (FGF2), found in Monodelphis domestica (Gray short-tailed opossum).